Reading from the N-terminus, the 154-residue chain is uncharacterized protein (154 aa).

The HotDog ACOT-type domain maps to 13 to 128; sequence SKGVLLLRTL…VFTFVAVDNN (116 aa).

It belongs to the acyl coenzyme A hydrolase family.

This is an uncharacterized protein from Haemophilus influenzae (strain ATCC 51907 / DSM 11121 / KW20 / Rd).